Consider the following 483-residue polypeptide: Jacalin-related lectin 13 (483 aa).

The disordered stretch occupies residues 1–20 (MTQKLESVGSERKSSEYMWD). Jacalin-type lectin domains lie at 2-147 (TQKL…YVTW), 150-295 (PARM…YFTT), and 307-461 (FREK…YFFP).

Belongs to the jacalin lectin family.

The polypeptide is Jacalin-related lectin 13 (JAL13) (Arabidopsis thaliana (Mouse-ear cress)).